The chain runs to 201 residues: Transgelin (201 aa).

A2 is modified (N-acetylalanine). One can recognise a Calponin-homology (CH) domain in the interval 24–137 (EELEERLVEW…RTLMALGSLA (114 aa)). Phosphoserine is present on S166. N6-acetyllysine is present on K172. Residues 175–200 (IGLQMGSNRGASQAGMTGYGRPRQII) form a Calponin-like repeat. S181 carries the phosphoserine modification. R183 bears the Omega-N-methylarginine mark.

This sequence belongs to the calponin family.

Its subcellular location is the cytoplasm. Actin cross-linking/gelling protein. Involved in calcium interactions and contractile properties of the cell that may contribute to replicative senescence. This Homo sapiens (Human) protein is Transgelin (TAGLN).